Consider the following 300-residue polypeptide: 5'-adenylylsulfate reductase-like 5 (300 aa).

A signal peptide spans 1–23 (MDSRVSILFVCAIAVSCFTSGSA). The region spanning 41-161 (FDLEAKCPPS…LIEFYEEATG (121 aa)) is the Thioredoxin domain. N-linked (GlcNAc...) asparagine glycosylation is present at Asn136. A helical transmembrane segment spans residues 202–222 (FLVLSLLFICLQMAILVFPIA).

It localises to the membrane. This chain is 5'-adenylylsulfate reductase-like 5 (APRL5), found in Arabidopsis thaliana (Mouse-ear cress).